Reading from the N-terminus, the 554-residue chain is Phenylalanine--tRNA ligase beta subunit (554 aa).

The B5 domain occupies 276–351 (LSLKSRMISV…INYGYEKFEG (76 aa)). D329, D335, E338, and E339 together coordinate Mg(2+).

It belongs to the phenylalanyl-tRNA synthetase beta subunit family. Type 2 subfamily. In terms of assembly, tetramer of two alpha and two beta subunits. The cofactor is Mg(2+).

It is found in the cytoplasm. It catalyses the reaction tRNA(Phe) + L-phenylalanine + ATP = L-phenylalanyl-tRNA(Phe) + AMP + diphosphate + H(+). This chain is Phenylalanine--tRNA ligase beta subunit, found in Methanococcus maripaludis (strain C5 / ATCC BAA-1333).